The chain runs to 404 residues: SAC3 domain-containing protein 1 (404 aa).

Disordered regions lie at residues 1 to 58 (MAGR…GTCP) and 77 to 117 (RLEV…QLRP). Pro residues predominate over residues 12-21 (PPRPAAPHPR). Positions 87-101 (DPPRADPQRAVKEYS) are enriched in basic and acidic residues. A PCI domain is found at 203–379 (QVQEGFGSLR…TCKVLVESKL (177 aa)). Phosphoserine is present on Ser-402.

This sequence belongs to the SAC3 family. As to quaternary structure, may be part of a SEM1-containing complex.

It localises to the cytoplasm. The protein localises to the cytoskeleton. Its subcellular location is the microtubule organizing center. It is found in the centrosome. The protein resides in the spindle. In terms of biological role, involved in centrosome duplication and mitotic progression. The chain is SAC3 domain-containing protein 1 (SAC3D1) from Homo sapiens (Human).